Consider the following 140-residue polypeptide: Cysteine protease inhibitor 6 (140 aa).

Cysteines 103 and 109 form a disulfide.

The protein belongs to the protease inhibitor I3 (leguminous Kunitz-type inhibitor) family.

The protein resides in the vacuole. Its function is as follows. Inhibitor of cysteine proteases. May protect the plant by inhibiting proteases of invading organisms. This Solanum tuberosum (Potato) protein is Cysteine protease inhibitor 6.